Consider the following 181-residue polypeptide: Large ribosomal subunit protein uL16 (181 aa).

Belongs to the universal ribosomal protein uL16 family.

This Pyrococcus abyssi (strain GE5 / Orsay) protein is Large ribosomal subunit protein uL16.